Here is a 360-residue protein sequence, read N- to C-terminus: Holliday junction branch migration complex subunit RuvB (360 aa).

The tract at residues 1–23 (MIASVGDSRYYPKSVANGEKSDQ) is disordered. A large ATPase domain (RuvB-L) region spans residues 12-204 (PKSVANGEKS…FGIVLRLEFY (193 aa)). ATP is bound by residues Leu43, Arg44, Gly85, Lys88, Thr89, Thr90, 151–153 (EDY), Arg194, Tyr204, and Arg241. Residue Thr89 participates in Mg(2+) binding. Residues 205–275 (TTEDLKIILK…TAQKALEMLE (71 aa)) form a small ATPAse domain (RuvB-S) region. The segment at 278–360 (QHGFDEVDRR…KPPKKQDSLF (83 aa)) is head domain (RuvB-H). DNA-binding residues include Arg333 and Arg338.

It belongs to the RuvB family. In terms of assembly, homohexamer. Forms an RuvA(8)-RuvB(12)-Holliday junction (HJ) complex. HJ DNA is sandwiched between 2 RuvA tetramers; dsDNA enters through RuvA and exits via RuvB. An RuvB hexamer assembles on each DNA strand where it exits the tetramer. Each RuvB hexamer is contacted by two RuvA subunits (via domain III) on 2 adjacent RuvB subunits; this complex drives branch migration. In the full resolvosome a probable DNA-RuvA(4)-RuvB(12)-RuvC(2) complex forms which resolves the HJ.

It localises to the cytoplasm. It carries out the reaction ATP + H2O = ADP + phosphate + H(+). Functionally, the RuvA-RuvB-RuvC complex processes Holliday junction (HJ) DNA during genetic recombination and DNA repair, while the RuvA-RuvB complex plays an important role in the rescue of blocked DNA replication forks via replication fork reversal (RFR). RuvA specifically binds to HJ cruciform DNA, conferring on it an open structure. The RuvB hexamer acts as an ATP-dependent pump, pulling dsDNA into and through the RuvAB complex. RuvB forms 2 homohexamers on either side of HJ DNA bound by 1 or 2 RuvA tetramers; 4 subunits per hexamer contact DNA at a time. Coordinated motions by a converter formed by DNA-disengaged RuvB subunits stimulates ATP hydrolysis and nucleotide exchange. Immobilization of the converter enables RuvB to convert the ATP-contained energy into a lever motion, pulling 2 nucleotides of DNA out of the RuvA tetramer per ATP hydrolyzed, thus driving DNA branch migration. The RuvB motors rotate together with the DNA substrate, which together with the progressing nucleotide cycle form the mechanistic basis for DNA recombination by continuous HJ branch migration. Branch migration allows RuvC to scan DNA until it finds its consensus sequence, where it cleaves and resolves cruciform DNA. In Koribacter versatilis (strain Ellin345), this protein is Holliday junction branch migration complex subunit RuvB.